The chain runs to 327 residues: Aspartate--ammonia ligase (327 aa).

It belongs to the class-II aminoacyl-tRNA synthetase family. AsnA subfamily.

It is found in the cytoplasm. The enzyme catalyses L-aspartate + NH4(+) + ATP = L-asparagine + AMP + diphosphate + H(+). It participates in amino-acid biosynthesis; L-asparagine biosynthesis; L-asparagine from L-aspartate (ammonia route): step 1/1. This Bacillus anthracis (strain A0248) protein is Aspartate--ammonia ligase.